Here is a 134-residue protein sequence, read N- to C-terminus: MAKAPNNAAAARVRKKVKKNVAEGIAHIHASFNNTIITITDRQGNALSWATSGGAGFKGSRKSTPFAAQVAAEAAGKVAIECGIKNLEVRIKGPGPGRESSVRALNNLGIKITQIQDVTPVPHNGCRPPKRRRI.

The protein belongs to the universal ribosomal protein uS11 family. In terms of assembly, part of the 30S ribosomal subunit. Interacts with proteins S7 and S18. Binds to IF-3.

Located on the platform of the 30S subunit, it bridges several disparate RNA helices of the 16S rRNA. Forms part of the Shine-Dalgarno cleft in the 70S ribosome. This chain is Small ribosomal subunit protein uS11, found in Herminiimonas arsenicoxydans.